A 253-amino-acid polypeptide reads, in one-letter code: HTH-type transcriptional regulator AdiY (253 aa).

The HTH araC/xylS-type domain maps to 149–246 (DSVYQIIESD…GMTPLHYVSQ (98 aa)). DNA-binding regions (H-T-H motif) lie at residues 166–187 (SMVA…KSEN) and 213–236 (ISQV…KDFY).

This Escherichia coli (strain K12) protein is HTH-type transcriptional regulator AdiY (adiY).